We begin with the raw amino-acid sequence, 364 residues long: Probable dual-specificity RNA methyltransferase RlmN (364 aa).

The active-site Proton acceptor is glutamate 107. Residues 113–346 enclose the Radical SAM core domain; the sequence is HEYGNSVCVT…ATIRREQGSD (234 aa). The cysteines at positions 120 and 351 are disulfide-linked. 3 residues coordinate [4Fe-4S] cluster: cysteine 127, cysteine 131, and cysteine 134. S-adenosyl-L-methionine contacts are provided by residues 177–178, serine 209, 232–234, and asparagine 308; these read GE and SLH. The active-site S-methylcysteine intermediate is the cysteine 351.

Belongs to the radical SAM superfamily. RlmN family. Requires [4Fe-4S] cluster as cofactor.

The protein resides in the cytoplasm. The enzyme catalyses adenosine(2503) in 23S rRNA + 2 reduced [2Fe-2S]-[ferredoxin] + 2 S-adenosyl-L-methionine = 2-methyladenosine(2503) in 23S rRNA + 5'-deoxyadenosine + L-methionine + 2 oxidized [2Fe-2S]-[ferredoxin] + S-adenosyl-L-homocysteine. It carries out the reaction adenosine(37) in tRNA + 2 reduced [2Fe-2S]-[ferredoxin] + 2 S-adenosyl-L-methionine = 2-methyladenosine(37) in tRNA + 5'-deoxyadenosine + L-methionine + 2 oxidized [2Fe-2S]-[ferredoxin] + S-adenosyl-L-homocysteine. Functionally, specifically methylates position 2 of adenine 2503 in 23S rRNA and position 2 of adenine 37 in tRNAs. Confers resistance to some classes of antibiotics. The sequence is that of Probable dual-specificity RNA methyltransferase RlmN from Staphylococcus carnosus (strain TM300).